The following is a 297-amino-acid chain: tRNA dimethylallyltransferase (297 aa).

ATP is bound at residue 15-22 (GPTASGKS). 17 to 22 (TASGKS) contacts substrate. Interaction with substrate tRNA regions lie at residues 40 to 43 (DSMQ) and 164 to 168 (QRIVR).

It belongs to the IPP transferase family. In terms of assembly, monomer. The cofactor is Mg(2+).

The enzyme catalyses adenosine(37) in tRNA + dimethylallyl diphosphate = N(6)-dimethylallyladenosine(37) in tRNA + diphosphate. Functionally, catalyzes the transfer of a dimethylallyl group onto the adenine at position 37 in tRNAs that read codons beginning with uridine, leading to the formation of N6-(dimethylallyl)adenosine (i(6)A). This Rhizobium leguminosarum bv. trifolii (strain WSM2304) protein is tRNA dimethylallyltransferase.